The chain runs to 401 residues: NADH-quinone oxidoreductase subunit D 2 (401 aa).

Belongs to the complex I 49 kDa subunit family. In terms of assembly, NDH-1 is composed of 14 different subunits. Subunits NuoB, C, D, E, F, and G constitute the peripheral sector of the complex.

The protein resides in the cell inner membrane. It catalyses the reaction a quinone + NADH + 5 H(+)(in) = a quinol + NAD(+) + 4 H(+)(out). Functionally, NDH-1 shuttles electrons from NADH, via FMN and iron-sulfur (Fe-S) centers, to quinones in the respiratory chain. The immediate electron acceptor for the enzyme in this species is believed to be ubiquinone. Couples the redox reaction to proton translocation (for every two electrons transferred, four hydrogen ions are translocated across the cytoplasmic membrane), and thus conserves the redox energy in a proton gradient. This Koribacter versatilis (strain Ellin345) protein is NADH-quinone oxidoreductase subunit D 2.